Reading from the N-terminus, the 289-residue chain is Iron-sulfur cluster carrier protein (289 aa).

The segment covering 1-18 (MAEECSGNCDSCGSSSDC) has biased composition (low complexity). A disordered region spans residues 1–20 (MAEECSGNCDSCGSSSDCSD). Residue 48 to 55 (GKGGVGKS) participates in ATP binding.

The protein belongs to the Mrp/NBP35 ATP-binding proteins family. In terms of assembly, homodimer.

In terms of biological role, binds and transfers iron-sulfur (Fe-S) clusters to target apoproteins. Can hydrolyze ATP. The polypeptide is Iron-sulfur cluster carrier protein (Methanococcus maripaludis (strain DSM 14266 / JCM 13030 / NBRC 101832 / S2 / LL)).